A 1148-amino-acid chain; its full sequence is Envelopment polyprotein (1148 aa).

Positions 1 to 23 are cleaved as a signal peptide; the sequence is MGELSPVCLYLLLQGLLLCNTGA. Residues 24 to 495 are Lumenal-facing; that stretch reads ARNLNELKME…VPGLHGWATM (472 aa). Intrachain disulfides connect Cys-34/Cys-159, Cys-68/Cys-165, Cys-117/Cys-136, Cys-141/Cys-146, Cys-183/Cys-193, and Cys-218/Cys-257. Asn-142 carries an N-linked (GlcNAc...) asparagine; by host glycan. The N-linked (GlcNAc...) asparagine; by host glycan is linked to Asn-357. Cystine bridges form between Cys-386–Cys-445, Cys-390–Cys-399, Cys-415–Cys-434, and Cys-462–Cys-485. Residue Asn-409 is glycosylated (N-linked (GlcNAc...) asparagine; by host). The helical transmembrane segment at 496 to 516 threads the bilayer; sequence LLLLTLCFGWVLIPTITMILL. The Cytoplasmic segment spans residues 517-637; it reads KILIAFAYLC…LSLFRYRSRF (121 aa). The segment at 526-543 is binding to the ribonucleoprotein; sequence CSKYNTDSKFRILIEKVK. CCHC-type zinc fingers lie at residues 555–575 and 580–601; these read CEVCQYECETAKELESHRKSC and CPYCLNPSEATTSALQAHFKVC. Binding to the ribonucleoprotein stretches follow at residues 598-615, 602-613, and 621-635; these read FKVCKLTSRFQENLRKSL, KLTSRFQENLRK, and MQGCYRTLSLFRYRS. The 24-residue stretch at 621-644 folds into the ITAM domain; sequence MQGCYRTLSLFRYRSRFFVGLVWC. The short motif at 625-628 is the YxxL element; the sequence is YRTL. Residues 638–658 form a helical membrane-spanning segment; the sequence is FVGLVWCVLLVLELIVWAASA. Over 659-1114 the chain is Lumenal; it reads ETQNLNAGWT…EWILGVLNGN (456 aa). Disulfide bonds link Cys-745–Cys-780, Cys-749–Cys-787, Cys-761–Cys-894, Cys-775–Cys-905, Cys-790–Cys-913, Cys-816–Cys-825, Cys-833–Cys-842, and Cys-873–Cys-877. Positions 767 to 787 are fusion loop; it reads YEYETGWGCNPPDCPGVGTGC. An N-linked (GlcNAc...) asparagine; by host glycan is attached at Asn-937. Disulfide bonds link Cys-979–Cys-1009, Cys-1002–Cys-1054, Cys-1019–Cys-1024, Cys-1055–Cys-1060, and Cys-1094–Cys-1098. The helical transmembrane segment at 1115-1135 threads the bilayer; sequence WMVVAVLVVLLILSILLFTLC. Binding to the ribonucleoprotein stretches follow at residues 1131–1143 and 1131–1148; these read LFTLCCPRRPSYR and LFTLCCPRRPSYRKEHKP. At 1136–1148 the chain is on the cytoplasmic side; it reads CPRRPSYRKEHKP.

It belongs to the hantavirus envelope glycoprotein family. In terms of assembly, homodimer. Homotetramer; forms heterotetrameric Gn-Gc spikes in the pre-fusion conformation. Interacts (via C-terminus) with the nucleoprotein. Interacts with host TUFM; this interaction contributes to the virus-induced degradation of mitochondria by autophagy, which leads to degradation of host MAVS and inhibition of type I interferon (IFN) responses. Interacts with host MAP1LC3B; this interaction contributes to the virus-induced degradation of mitochondria by autophagy, which leads to degradation of host MAVS and inhibition of type I interferon (IFN) responses. Homodimer. Homotetramer; forms heterotetrameric Gn-Gc spikes in the pre-fusion conformation. Homotrimer; forms homotrimer in the post-fusion conformation at acidic pH. Interacts (via C-terminus) with the nucleoprotein. Envelope polyprotein precursor is quickly cleaved in vivo just after synthesis, presumably by host signal peptidase.

Its subcellular location is the virion membrane. It is found in the host cell surface. The protein localises to the host Golgi apparatus membrane. It localises to the host endoplasmic reticulum membrane. The protein resides in the host mitochondrion. Its function is as follows. Forms homotetramers with glycoprotein C at the surface of the virion. Attaches the virion to host cell receptors including integrin ITGAV/ITGB3. This attachment induces virion internalization predominantly through clathrin-dependent endocytosis. Mediates the assembly and budding of infectious virus particles through its interaction with the nucleocapsid protein and the viral genome. May dysregulate normal immune and endothelial cell responses through an ITAM motif. Translocates to mitochondria, binds to host TUFM and recruits MAP1LC3B. These interactions induce mitochondrial autophagy and therefore destruction of host MAVS leading to inhibition of type I interferon (IFN) responses. Concomitant breakdown of glycoprotein N is apparently prevented by the nucleoprotein that may inhibit Gn-stimulated autophagosome-lysosome fusion. Interacts with the viral genomic RNA. Functionally, forms homotetramers with glycoprotein N at the surface of the virion. Attaches the virion to host cell receptors including integrin ITGAV/ITGB3. This attachment induces virion internalization predominantly through clathrin-dependent endocytosis. Class II fusion protein that promotes fusion of viral membrane with host endosomal membrane after endocytosis of the virion. The protein is Envelopment polyprotein (GP) of Puumala virus (strain K27).